The primary structure comprises 544 residues: MSRETNFNGTKRKRSDVAEKVAQRWKSVRYSAEMENMAPVNSNNDSDDCVIVSESKIIDLTNQEQDLSERIETNDTAKGAVFKLMKSDFYEREDFMGEVEDMITLKDIFGTETLKRSILFSFQYELDFLLRQFHQNVENITIVGQKGTIMPIEARAMDATLAVILKKVKLIEITMPPFASHHTKLIINFYDNGECKIFLPSNNFTSMETNLPQQVCWCSPLLKIGKEGLPVPFKRSLIEYLNSYHLKDIDELITKSVEEVNFAPLSELEFVYSTPSKFQSSGLLSFYNKLEKLSAGTSASDTAKHYLCQTSSIGTSLSRARDENLWTHLMIPLFTGIMSPPAKDTAGRKKAEILPTNSLINEYSQRKIKPYIIFPTEQEFVTSPLKWSSSGWFHFQYLQKKSYYEMLRNKFKVFYKQDPAMVTRRRGTTPAHSKFYMHCATNSAGPCDASQVFKELEWCLYTSANLSQTAWGTVSRKPRNYEAGVLYHSRRLANTRKVTCRTFTRDRRGCAGNPTHVAVPFTLPVIPYDLAEDECFCLARHEND.

Residue His-182 is the Nucleophile of the active site. Lys-184 lines the substrate pocket. The tract at residues 312 to 316 (SIGTS) is interaction with DNA. The Proton donor/acceptor role is filled by His-432. Lys-434 contacts substrate.

Belongs to the tyrosyl-DNA phosphodiesterase family.

The protein localises to the nucleus. Functionally, DNA repair enzyme that can remove a variety of covalent adducts from DNA through hydrolysis of a 3'-phosphodiester bond, giving rise to DNA with a free 3' phosphate. Catalyzes the hydrolysis of dead-end complexes between DNA and the topoisomerase I active site tyrosine residue. Hydrolyzes 3'-phosphoglycolates on protruding 3' ends on DNA double-strand breaks due to DNA damage by radiation and free radicals. Also cleaves 5' phosphotyrosyl adducts resulting from dead-end complexes between DNA and the active site tyrosine of topoisomerase II. Contributes to DNA repair after radiation damage. Acts on blunt-ended double-strand DNA breaks and on single-stranded DNA. May have low 3'exonuclease activity and may be able to remove a single nucleoside from the 3'end of DNA and RNA molecules with 3'hydroxyl groups. Has no exonuclease activity towards DNA or RNA with a 3'phosphate. This is Tyrosyl-DNA phosphodiesterase 1 (TDP1) from Saccharomyces cerevisiae (strain ATCC 204508 / S288c) (Baker's yeast).